A 517-amino-acid chain; its full sequence is Protein MGF 505-2R (517 aa).

Belongs to the asfivirus MGF 505 family.

Plays a role in virus cell tropism, and may be required for efficient virus replication in macrophages. The polypeptide is Protein MGF 505-2R (Ornithodoros (relapsing fever ticks)).